Reading from the N-terminus, the 615-residue chain is Fibrinogen alpha chain (615 aa).

The N-terminal stretch at 1-19 is a signal peptide; sequence MFSVRDLCLVLSLVGAIKT. A coiled-coil region spans residues 71-602; it reads CRMKGLIDEV…GHTKARPARG (532 aa). The disordered stretch occupies residues 267 to 427; the sequence is FGGDGHARGD…TKQEFHTGKL (161 aa). Residues 293–302 are compositionally biased toward polar residues; sequence GTSSIGNVNP. Thr325 carries an O-linked (GalNAc...) threonine glycan. Residues 373–396 show a composition bias toward low complexity; the sequence is GSAGTWNTGSSGSSSFRPDSSGHG. An intrachain disulfide couples Cys455 to Cys485. The tract at residues 530–615 is disordered; it reads EFAALGESGS…SPLGEPSLTP (86 aa). Over residues 537–549 the composition is skewed to low complexity; it reads SGSSSSKTSTHSK. Over residues 550–560 the composition is skewed to polar residues; it reads QFVSSSTTVNR. A compositionally biased stretch (basic residues) spans 591-601; that stretch reads QKGHTKARPAR.

As to quaternary structure, heterohexamer; disulfide linked. Contains 2 sets of 3 non-identical chains (alpha, beta and gamma). The 2 heterotrimers are in head to head conformation with the N-termini in a small central domain. Post-translationally, conversion of fibrinogen to fibrin is triggered by thrombin, which cleaves fibrinopeptides A and B from alpha and beta chains, and thus exposes the N-terminal polymerization sites responsible for the formation of the soft clot. The soft clot is converted into the hard clot by factor XIIIA which catalyzes the epsilon-(gamma-glutamyl)lysine cross-linking between gamma chains (stronger) and between alpha chains (weaker) of different monomers. In terms of processing, forms F13A-mediated cross-links between a glutamine and the epsilon-amino group of a lysine residue, forming fibronectin-fibrinogen heteropolymers.

Its subcellular location is the secreted. In terms of biological role, cleaved by the protease thrombin to yield monomers which, together with fibrinogen beta (FGB) and fibrinogen gamma (FGG), polymerize to form an insoluble fibrin matrix. Fibrin has a major function in hemostasis as one of the primary components of blood clots. In addition, functions during the early stages of wound repair to stabilize the lesion and guide cell migration during re-epithelialization. Was originally thought to be essential for platelet aggregation, based on in vitro studies using anticoagulated blood. However, subsequent studies have shown that it is not absolutely required for thrombus formation in vivo. Enhances expression of SELP in activated platelets via an ITGB3-dependent pathway. Maternal fibrinogen is essential for successful pregnancy. Fibrin deposition is also associated with infection, where it protects against IFNG-mediated hemorrhage. May also facilitate the immune response via both innate and T-cell mediated pathways. The protein is Fibrinogen alpha chain (FGA) of Bos taurus (Bovine).